The following is a 196-amino-acid chain: Fucoxanthin-chlorophyll a-c binding protein A, chloroplastic (196 aa).

A chloroplast-targeting transit peptide spans 1–31; sequence MKFAVFASLLASRAAFAPAQQSARTSVATNM. 3 consecutive transmembrane segments (helical) span residues 73–94, 114–134, and 174–196; these read ICML…PGDI, VPGA…IAVM, and GRAA…SILP.

Belongs to the fucoxanthin chlorophyll protein family. As to quaternary structure, the LHC complex of chromophytic algae is composed of fucoxanthin, chlorophyll A and C bound non-covalently by fucoxanthin chlorophyll proteins (FCPs). The ratio of the pigments in LHC; fucoxanthin: chlorophyll C: chlorophyll A; (0.6-1): (0.1-0.3): (1).

The protein localises to the plastid. It is found in the chloroplast thylakoid membrane. In terms of biological role, the light-harvesting complex (LHC) functions as a light receptor, it captures and delivers excitation energy to photosystems with which it is closely associated. Energy is transferred from the carotenoid and chlorophyll C (or B) to chlorophyll A and the photosynthetic reaction centers where it is used to synthesize ATP and reducing power. This is Fucoxanthin-chlorophyll a-c binding protein A, chloroplastic (FCPA) from Phaeodactylum tricornutum (Diatom).